The chain runs to 449 residues: MNPNQKIIAIGSICMVIGIVSLMLQIGNMISIWISHSIQTGNQRQAEPISNTKVLNEKAVASVTLAGNSSLCPISGWAVHSKDNSIRIGSKGDVFVIREPFISCSHLECRTFFLTQGALLNDKHSNGTVKDRSPHRTLMSCPVGEAPSPYNSRFESVAWSASACHDGTSWLTIGISGPDNGAVAVLKYNGIITDTIKSWRNNILRTQESECACVNGSCFTVMTDGPSNGQASYKIFKMEKGKVVKSVELDAPNYHYEECSCYPDAGEITCVCRDNWHGSNRPWVSFNQNLEYQIGYICSGVFGDNPRPNDGTGSCGPVSPNGAYGVKGFSFKYGNGVWIGRTKSTNSRSGFEMIWDPNGWTGTDSSFSVKQDIVAITDWSGYSGSFVQHPELTGLDCIRPCFWVELIRGRPKESTIWTSGSSISFCGVDSDTVGWSWPDGAELPFTIDK.

Residues 1–6 (MNPNQK) are Intravirion-facing. A helical membrane pass occupies residues 7–27 (IIAIGSICMVIGIVSLMLQIG). Residues 11-33 (GSICMVIGIVSLMLQIGNMISIW) form an involved in apical transport and lipid raft association region. At 28–449 (NMISIWISHS…GAELPFTIDK (422 aa)) the chain is on the virion surface side. Residues 36 to 70 (HSIQTGNQRQAEPISNTKVLNEKAVASVTLAGNSS) form a hypervariable stalk region region. An N-linked (GlcNAc...) asparagine; by host glycan is attached at N68. The segment at 71-449 (LCPISGWAVH…GAELPFTIDK (379 aa)) is head of neuraminidase. Disulfide bonds link C72–C397, C104–C109, C164–C211, C213–C218, C259–C272, C261–C270, C298–C315, and C401–C426. R98 is a substrate binding site. N-linked (GlcNAc...) asparagine; by host glycosylation occurs at N126. Residue D131 is the Proton donor/acceptor of the active site. R132 lines the substrate pocket. A glycan (N-linked (GlcNAc...) asparagine; by host) is linked at N215. 257–258 (EE) is a binding site for substrate. R273 contacts substrate. Residues D274, G278, and D304 each coordinate Ca(2+). R348 contributes to the substrate binding site. Y382 (nucleophile) is an active-site residue.

This sequence belongs to the glycosyl hydrolase 34 family. In terms of assembly, homotetramer. The cofactor is Ca(2+). Post-translationally, N-glycosylated.

Its subcellular location is the virion membrane. It is found in the host apical cell membrane. It catalyses the reaction Hydrolysis of alpha-(2-&gt;3)-, alpha-(2-&gt;6)-, alpha-(2-&gt;8)- glycosidic linkages of terminal sialic acid residues in oligosaccharides, glycoproteins, glycolipids, colominic acid and synthetic substrates.. Its activity is regulated as follows. Inhibited by the neuraminidase inhibitors zanamivir (Relenza) and oseltamivir (Tamiflu). These drugs interfere with the release of progeny virus from infected cells and are effective against all influenza strains. Resistance to neuraminidase inhibitors is quite rare. Functionally, catalyzes the removal of terminal sialic acid residues from viral and cellular glycoconjugates. Cleaves off the terminal sialic acids on the glycosylated HA during virus budding to facilitate virus release. Additionally helps virus spread through the circulation by further removing sialic acids from the cell surface. These cleavages prevent self-aggregation and ensure the efficient spread of the progeny virus from cell to cell. Otherwise, infection would be limited to one round of replication. Described as a receptor-destroying enzyme because it cleaves a terminal sialic acid from the cellular receptors. May facilitate viral invasion of the upper airways by cleaving the sialic acid moieties on the mucin of the airway epithelial cells. Likely to plays a role in the budding process through its association with lipid rafts during intracellular transport. May additionally display a raft-association independent effect on budding. Plays a role in the determination of host range restriction on replication and virulence. Sialidase activity in late endosome/lysosome traffic seems to enhance virus replication. The polypeptide is Neuraminidase (Aves (Cat)).